The primary structure comprises 353 residues: Photosystem II D2 protein (353 aa).

An N-acetylthreonine modification is found at T2. T2 is subject to Phosphothreonine. Residues 41–61 traverse the membrane as a helical segment; sequence CAYFALGGWFTGTTFVTSWYT. Residue H118 coordinates chlorophyll a. A helical membrane pass occupies residues 125–141; the sequence is GFMLRQFELARSVQLRP. Pheophytin a is bound by residues Q130 and N143. A helical membrane pass occupies residues 153 to 166; the sequence is VFVSVFLIYPLGQS. H198 is a chlorophyll a binding site. Residues 208–228 form a helical membrane-spanning segment; it reads AALLCAIHGATVENTLFEDGD. The a plastoquinone site is built by H215 and F262. Residue H215 participates in Fe cation binding. H269 provides a ligand contact to Fe cation. Residues 279–295 traverse the membrane as a helical segment; the sequence is GLWMSALGVVGLALNLR.

This sequence belongs to the reaction center PufL/M/PsbA/D family. PSII is composed of 1 copy each of membrane proteins PsbA, PsbB, PsbC, PsbD, PsbE, PsbF, PsbH, PsbI, PsbJ, PsbK, PsbL, PsbM, PsbT, PsbX, PsbY, PsbZ, Psb30/Ycf12, at least 3 peripheral proteins of the oxygen-evolving complex and a large number of cofactors. It forms dimeric complexes. It depends on The D1/D2 heterodimer binds P680, chlorophylls that are the primary electron donor of PSII, and subsequent electron acceptors. It shares a non-heme iron and each subunit binds pheophytin, quinone, additional chlorophylls, carotenoids and lipids. There is also a Cl(-1) ion associated with D1 and D2, which is required for oxygen evolution. The PSII complex binds additional chlorophylls, carotenoids and specific lipids. as a cofactor.

It is found in the plastid. The protein resides in the chloroplast thylakoid membrane. It carries out the reaction 2 a plastoquinone + 4 hnu + 2 H2O = 2 a plastoquinol + O2. Its function is as follows. Photosystem II (PSII) is a light-driven water:plastoquinone oxidoreductase that uses light energy to abstract electrons from H(2)O, generating O(2) and a proton gradient subsequently used for ATP formation. It consists of a core antenna complex that captures photons, and an electron transfer chain that converts photonic excitation into a charge separation. The D1/D2 (PsbA/PsbD) reaction center heterodimer binds P680, the primary electron donor of PSII as well as several subsequent electron acceptors. D2 is needed for assembly of a stable PSII complex. The polypeptide is Photosystem II D2 protein (Nandina domestica (Heavenly bamboo)).